A 192-amino-acid polypeptide reads, in one-letter code: MLKKSLAALALGTALLSAGQAMAADYVIDKEGQHAFVDFKISHLGYSFIHGTFKDWDGTFSFDAAKPEASKINVELKTASLFTNHAERDKHISSKDFLDVAKYPEAKFVSTAVKSTGEKTADVTGDLTLHGVTKPIVIKATFNGEGKDPWGGYRAGFNGTSTLNLNDFGIKGPGPTSQTLDLDISFEGVQKK.

The N-terminal stretch at 1 to 23 (MLKKSLAALALGTALLSAGQAMA) is a signal peptide.

The protein belongs to the UPF0312 family. Type 1 subfamily.

It localises to the periplasm. This Pseudomonas syringae pv. syringae (strain B728a) protein is UPF0312 protein Psyr_0457.